Reading from the N-terminus, the 316-residue chain is Ribose-phosphate pyrophosphokinase (316 aa).

Residues 41–43 and 100–101 contribute to the ATP site; these read DGE and RQ. Residues His134 and Asp175 each coordinate Mg(2+). The active site involves Lys198. D-ribose 5-phosphate is bound by residues Arg200, Asp224, and 228 to 232; that span reads DTARS.

It belongs to the ribose-phosphate pyrophosphokinase family. Class I subfamily. In terms of assembly, homohexamer. It depends on Mg(2+) as a cofactor.

The protein resides in the cytoplasm. The enzyme catalyses D-ribose 5-phosphate + ATP = 5-phospho-alpha-D-ribose 1-diphosphate + AMP + H(+). The protein operates within metabolic intermediate biosynthesis; 5-phospho-alpha-D-ribose 1-diphosphate biosynthesis; 5-phospho-alpha-D-ribose 1-diphosphate from D-ribose 5-phosphate (route I): step 1/1. Its function is as follows. Involved in the biosynthesis of the central metabolite phospho-alpha-D-ribosyl-1-pyrophosphate (PRPP) via the transfer of pyrophosphoryl group from ATP to 1-hydroxyl of ribose-5-phosphate (Rib-5-P). This chain is Ribose-phosphate pyrophosphokinase, found in Thermosipho africanus (strain TCF52B).